Here is an 851-residue protein sequence, read N- to C-terminus: Beta-galactosidase 3 (851 aa).

An N-terminal signal peptide occupies residues 1–29; that stretch reads MAGASSYFSLRRLLLLLLPLVPLLGATTA. N35 carries an N-linked (GlcNAc...) asparagine glycan. E194 functions as the Proton donor in the catalytic mechanism. The active-site Nucleophile is the E263. N361, N475, N528, and N533 each carry an N-linked (GlcNAc...) asparagine glycan. The region spanning 765 to 851 is the SUEL-type lectin domain; the sequence is GRDAAKVQLS…KTLAIEADCS (87 aa).

The protein belongs to the glycosyl hydrolase 35 family.

The protein resides in the secreted. It is found in the extracellular space. Its subcellular location is the apoplast. The catalysed reaction is Hydrolysis of terminal non-reducing beta-D-galactose residues in beta-D-galactosides.. In Oryza sativa subsp. japonica (Rice), this protein is Beta-galactosidase 3.